The chain runs to 88 residues: Alkene monooxygenase system, oxygenase component subunit gamma (88 aa).

Belongs to the TmoB/XamoB family. The alkene monooxygenase multicomponent enzyme system is composed of an electron transfer component and a monooxygenase component interacting with the effector protein XamoD. The electron transfer component is composed of a ferredoxin reductase (XamoF) and a ferredoxin (XamoC), and the monooxygenase component is formed by a heterohexamer (dimer of heterotrimers) of two alpha subunits (XamoA), two beta subunits (XamoE) and two gamma subunits (XamoB).

The protein resides in the cytoplasm. It carries out the reaction propene + NADH + O2 + H(+) = 1,2-epoxypropane + NAD(+) + H2O. With respect to regulation, inhibited by propyne. Its function is as follows. Component of the alkene monooxygenase multicomponent enzyme system which catalyzes the O2- and NADH-dependent epoxidation of short chain (C2 to C6) alkenes to their corresponding epoxides. Also able to catalyze the oxidation of a number of chlorinated alkenes, including trichloroethylene, cis- and trans-1,2-dichloroethylene, vinyl chloride, 1-chloropropylene, 1,3-dichloropropylene and 2,3-dichloropropylene. The polypeptide is Alkene monooxygenase system, oxygenase component subunit gamma (Xanthobacter autotrophicus (strain ATCC BAA-1158 / Py2)).